The primary structure comprises 331 residues: MLFRFGVVVPPAVAGTRLELLLAGSRPELGRWEPRGAVRLRPAGTAAGAAALALQEPGLWLAEVELAPEEEAADGAEPGRIDTFWYKFLQREPGGELHWEGNGPHHDRCCTYNENNLVDGVYCLPVGHWIEATGHTNEMKHTTDFYFNIAGHQAMHYSRILPNIWLGSCPRQLEHVTIKLKHELGITAVMNFQTEWDIIQNSSGCNRYPEPMTPDTMMKLYKEEGLAYIWMPTPDMSTEGRVQMLPQAVCLLHALLENGHTVYVHCNAGVGRSTAAVCGWLHYVIGWSLRKVQYFIMAKRPAVYIDEEALAQAQQDFFQKFGKVHSSICTL.

Residues 1-124 (MLFRFGVVVP…NNLVDGVYCL (124 aa)) enclose the CBM20 domain. The residue at position 25 (Ser25) is a Phosphoserine; by AMPK. Substrate is bound by residues Trp32, Lys87, 103-107 (GPHHD), Asp197, Asp235, and Arg241. One can recognise a Tyrosine-protein phosphatase domain in the interval 156-323 (HYSRILPNIW…QQDFFQKFGK (168 aa)). Residue Cys266 is the Phosphocysteine intermediate of the active site. A Glucan phosphatase signature motif CXAGXGR motif is present at residues 266–272 (CNAGVGR). Residues 267–272 (NAGVGR) and Tyr304 contribute to the substrate site.

The protein belongs to the protein-tyrosine phosphatase family. As to quaternary structure, homodimer. Interacts with itself. Interacts with PPP1R3B, PPP1R3C, PPP1R3D, HIRIP5, and EPM2AIP1. Binds glycogen and Lafora bodies. Interacts with NHLRC1/malin (via the NHL repeats). Forms a complex with NHLRC1/malin and HSP70. Interacts with PPP1R3D; in the presence of NHLC1/malin the interaction leads to ubiquitination and autophagic degradation of PPP1R3D. Interacts (via the phosphatase domain) with MAPT/Tau; the interaction dephosphorylates MAPT. Interacts with PRDM8. In terms of processing, polyubiquitinated by NHLRC1/malin. Post-translationally, phosphorylation on Ser-25 by AMPK affects the phosphatase activity of the enzyme and its ability to homodimerize and interact with NHLRC1, PPP1R3C or PRKAA2. In terms of tissue distribution, widely expressed.

The protein resides in the cytoplasm. The protein localises to the endoplasmic reticulum membrane. Its subcellular location is the cell membrane. It carries out the reaction O-phospho-L-tyrosyl-[protein] + H2O = L-tyrosyl-[protein] + phosphate. The catalysed reaction is O-phospho-L-seryl-[protein] + H2O = L-seryl-[protein] + phosphate. The enzyme catalyses O-phospho-L-threonyl-[protein] + H2O = L-threonyl-[protein] + phosphate. Plays an important role in preventing glycogen hyperphosphorylation and the formation of insoluble aggregates, via its activity as glycogen phosphatase, and by promoting the ubiquitination of proteins involved in glycogen metabolism via its interaction with the E3 ubiquitin ligase NHLRC1/malin. Dephosphorylates phosphotyrosine and synthetic substrates, such as para-nitrophenylphosphate (pNPP), and has low activity with phosphoserine and phosphothreonine substrates (in vitro). Has also been shown to dephosphorylate MAPT. Shows strong phosphatase activity towards complex carbohydrates in vitro, avoiding glycogen hyperphosphorylation which is associated with reduced branching and formation of insoluble aggregates. Forms a complex with NHLRC1/malin and HSP70, which suppresses the cellular toxicity of misfolded proteins by promoting their degradation through the ubiquitin-proteasome system (UPS). Acts as a scaffold protein to facilitate PPP1R3C/PTG ubiquitination by NHLRC1/malin. Also promotes proteasome-independent protein degradation through the macroautophagy pathway. This is Laforin (Epm2a) from Rattus norvegicus (Rat).